The primary structure comprises 363 residues: Aminomethyltransferase (363 aa).

Belongs to the GcvT family. In terms of assembly, the glycine cleavage system is composed of four proteins: P, T, L and H.

It catalyses the reaction N(6)-[(R)-S(8)-aminomethyldihydrolipoyl]-L-lysyl-[protein] + (6S)-5,6,7,8-tetrahydrofolate = N(6)-[(R)-dihydrolipoyl]-L-lysyl-[protein] + (6R)-5,10-methylene-5,6,7,8-tetrahydrofolate + NH4(+). Functionally, the glycine cleavage system catalyzes the degradation of glycine. This is Aminomethyltransferase from Picosynechococcus sp. (strain ATCC 27264 / PCC 7002 / PR-6) (Agmenellum quadruplicatum).